The chain runs to 191 residues: MSLISRLKAVVAGDEYLEDDFDELDYASEDELNDINNFKQNPKNANALANSNPFDFMNNNRSSKVVGMPGISNSSSEVSLMEPRSFDEMPQAIQALRERKTVILNLTMMDPDQAQRAVDFIAGGTYAIDGHQERVGESIFLFAPSCVNVTSSSPEEASPSSVSTEKTPQYSLGKNTTPEPAWGNSKLSAYS.

Positions 151–164 (SSSPEEASPSSVST) are enriched in low complexity. Residues 151-191 (SSSPEEASPSSVSTEKTPQYSLGKNTTPEPAWGNSKLSAYS) form a disordered region. Residues 165–178 (EKTPQYSLGKNTTP) show a composition bias toward polar residues.

This sequence belongs to the SepF family. Homodimer. Interacts with FtsZ.

Its subcellular location is the cytoplasm. In terms of biological role, cell division protein that is part of the divisome complex and is recruited early to the Z-ring. Probably stimulates Z-ring formation, perhaps through the cross-linking of FtsZ protofilaments. Its function overlaps with FtsA. The protein is Cell division protein SepF of Prochlorococcus marinus (strain MIT 9301).